Consider the following 321-residue polypeptide: Probable heme-iron transport system permease protein IsdF (321 aa).

9 helical membrane passes run 9-29 (LLFLCLLVILIATAYISFVTG), 61-81 (ILIALMVGAMLAVSGALLQAA), 89-109 (ANIIGVSSGALIMRALCMLFI), 114-134 (FYLPLLSFIGGLIPFLIIILL), 143-163 (VSMILVGVALFVLLNGVLEIL), 179-199 (IWSDVYILAVSALLGLILTLL), 233-253 (VFLASATVAIVGQLAFLGIIV), 267-287 (LIPFSTVIGAWLLLVADLLGR), and 294-314 (EIPANAILMIVGGPMLIYLIC).

Belongs to the binding-protein-dependent transport system permease family. FecCD subfamily.

Its subcellular location is the cell membrane. Functionally, part of the binding-protein-dependent transport system for heme-iron. Responsible for the translocation of the substrate across the membrane. This is Probable heme-iron transport system permease protein IsdF (isdF) from Staphylococcus aureus (strain NCTC 8325 / PS 47).